We begin with the raw amino-acid sequence, 539 residues long: Phosphoenolpyruvate carboxykinase (ATP) (539 aa).

Positions 64, 206, and 212 each coordinate substrate. Residues Lys212, His231, and 247-255 contribute to the ATP site; that span reads GLSGTGKTT. Mn(2+) is bound by residues Lys212 and His231. Asp268 serves as a coordination point for Mn(2+). Residues Glu296, Arg332, 448–449, and Thr454 each bind ATP; that span reads RI. Arg332 contacts substrate.

The protein belongs to the phosphoenolpyruvate carboxykinase (ATP) family. As to quaternary structure, monomer. The cofactor is Mn(2+).

Its subcellular location is the cytoplasm. The catalysed reaction is oxaloacetate + ATP = phosphoenolpyruvate + ADP + CO2. It participates in carbohydrate biosynthesis; gluconeogenesis. Functionally, involved in the gluconeogenesis. Catalyzes the conversion of oxaloacetate (OAA) to phosphoenolpyruvate (PEP) through direct phosphoryl transfer between the nucleoside triphosphate and OAA. In Hamiltonella defensa subsp. Acyrthosiphon pisum (strain 5AT), this protein is Phosphoenolpyruvate carboxykinase (ATP).